The primary structure comprises 260 residues: Flap endonuclease Xni (260 aa).

D105 contributes to the Mg(2+) binding site. The 96-residue stretch at 164-259 (NQFLDLMALA…VNGPANTQQA (96 aa)) folds into the 5'-3' exonuclease domain. K(+)-binding residues include L172, A173, P181, I183, and I186. Residues 185–190 (GIGPKS) form an interaction with DNA region.

Belongs to the Xni family. The cofactor is Mg(2+). Requires K(+) as cofactor.

In terms of biological role, has flap endonuclease activity. During DNA replication, flap endonucleases cleave the 5'-overhanging flap structure that is generated by displacement synthesis when DNA polymerase encounters the 5'-end of a downstream Okazaki fragment. In Shewanella sp. (strain MR-4), this protein is Flap endonuclease Xni.